Reading from the N-terminus, the 91-residue chain is DNA-directed RNA polymerase subunit Rpo11 (91 aa).

Belongs to the archaeal Rpo11/eukaryotic RPB11/RPC19 RNA polymerase subunit family. In terms of assembly, part of the RNA polymerase complex.

The protein localises to the cytoplasm. The catalysed reaction is RNA(n) + a ribonucleoside 5'-triphosphate = RNA(n+1) + diphosphate. In terms of biological role, DNA-dependent RNA polymerase (RNAP) catalyzes the transcription of DNA into RNA using the four ribonucleoside triphosphates as substrates. The sequence is that of DNA-directed RNA polymerase subunit Rpo11 from Methanothrix thermoacetophila (strain DSM 6194 / JCM 14653 / NBRC 101360 / PT) (Methanosaeta thermophila).